The sequence spans 159 residues: MNISIISVGKLKEKYLKQGIAEYTKRLGAYAKIELIEVPDEKAPEQLSDTEMEHVKQKEGERILAKLHPDTYVIALAIEGSMKSSEELADTMDRLATYGKSKVAFVIGGSLGLSDAVLKRADEKLSFSKMTFPHRLMRLILLEQVYRAFRINRGEPYHK.

Residues L76, G108, and 127-132 (FSKMTF) contribute to the S-adenosyl-L-methionine site.

This sequence belongs to the RNA methyltransferase RlmH family. Homodimer.

The protein resides in the cytoplasm. It carries out the reaction pseudouridine(1915) in 23S rRNA + S-adenosyl-L-methionine = N(3)-methylpseudouridine(1915) in 23S rRNA + S-adenosyl-L-homocysteine + H(+). Specifically methylates the pseudouridine at position 1915 (m3Psi1915) in 23S rRNA. This is Ribosomal RNA large subunit methyltransferase H from Halalkalibacterium halodurans (strain ATCC BAA-125 / DSM 18197 / FERM 7344 / JCM 9153 / C-125) (Bacillus halodurans).